A 354-amino-acid chain; its full sequence is Isopentenyl-diphosphate delta-isomerase (354 aa).

Residue 11 to 12 participates in substrate binding; that stretch reads KK. Residues S67, 68 to 70, S98, and N126 each bind FMN; that span reads SMT. 98-100 is a binding site for substrate; sequence SFK. Q160 serves as a coordination point for substrate. E161 serves as a coordination point for Mg(2+). Residues K192, T222, and 289–290 each bind FMN; that span reads AA.

Belongs to the IPP isomerase type 2 family. Homooctamer. Dimer of tetramers. FMN is required as a cofactor. It depends on NADPH as a cofactor. The cofactor is Mg(2+).

It localises to the cytoplasm. The catalysed reaction is isopentenyl diphosphate = dimethylallyl diphosphate. Its function is as follows. Involved in the biosynthesis of isoprenoids. Catalyzes the 1,3-allylic rearrangement of the homoallylic substrate isopentenyl (IPP) to its allylic isomer, dimethylallyl diphosphate (DMAPP). The protein is Isopentenyl-diphosphate delta-isomerase of Borrelia garinii subsp. bavariensis (strain ATCC BAA-2496 / DSM 23469 / PBi) (Borreliella bavariensis).